The primary structure comprises 938 residues: Leucine--tRNA ligase 1 (938 aa).

Residues 40–50 (PYTNSPLHIGH) carry the 'HIGH' region motif. Positions 620–624 (KMSKS) match the 'KMSKS' region motif. Lys-623 contributes to the ATP binding site.

It belongs to the class-I aminoacyl-tRNA synthetase family.

Its subcellular location is the cytoplasm. It carries out the reaction tRNA(Leu) + L-leucine + ATP = L-leucyl-tRNA(Leu) + AMP + diphosphate. This chain is Leucine--tRNA ligase 1, found in Metallosphaera sedula (strain ATCC 51363 / DSM 5348 / JCM 9185 / NBRC 15509 / TH2).